The sequence spans 394 residues: Uroporphyrinogen decarboxylase 2, chloroplastic (394 aa).

Residues 74–78 (RQAGR), Phe-93, Ser-123, Asp-124, Tyr-201, Ser-256, and His-371 contribute to the substrate site.

Belongs to the uroporphyrinogen decarboxylase family. In terms of assembly, homodimer.

Its subcellular location is the plastid. It localises to the chloroplast. It catalyses the reaction uroporphyrinogen III + 4 H(+) = coproporphyrinogen III + 4 CO2. Its pathway is porphyrin-containing compound metabolism; protoporphyrin-IX biosynthesis; coproporphyrinogen-III from 5-aminolevulinate: step 4/4. It participates in porphyrin-containing compound metabolism; chlorophyll biosynthesis. Catalyzes the decarboxylation of four acetate groups of uroporphyrinogen-III to yield coproporphyrinogen-III. The chain is Uroporphyrinogen decarboxylase 2, chloroplastic (HEME2) from Arabidopsis thaliana (Mouse-ear cress).